We begin with the raw amino-acid sequence, 636 residues long: Molybdenum cofactor biosynthesis protein 1 (636 aa).

The segment at 1-383 (MAARPLSRML…QMKNRPMILI (383 aa)) is molybdenum cofactor biosynthesis protein A. Residue Ser64 is modified to Phosphoserine. The region spanning 64–277 (SFGRQHSYLR…LDTVRQQWPE (214 aa)) is the Radical SAM core domain. Residue Arg73 coordinates GTP. Residues Cys80 and Cys84 each coordinate [4Fe-4S] cluster. Tyr86 is an S-adenosyl-L-methionine binding site. Residue Cys87 coordinates [4Fe-4S] cluster. Arg123 lines the GTP pocket. Position 127 (Gly127) interacts with S-adenosyl-L-methionine. Position 154 (Thr154) interacts with GTP. Ser178 lines the S-adenosyl-L-methionine pocket. Lys198 is subject to N6-acetyllysine. Lys215 contacts GTP. Residue Met249 participates in S-adenosyl-L-methionine binding. Residues Cys312 and Cys315 each coordinate [4Fe-4S] cluster. Residue 317–319 (RLR) coordinates GTP. Residue Cys329 participates in [4Fe-4S] cluster binding. The tract at residues 414–636 (MSFSSQVATL…GGQRGDFHRA (223 aa)) is molybdenum cofactor biosynthesis protein C. The interval 456-480 (DANSKCLSPGSWASAAPSGPQLTSE) is disordered. A compositionally biased stretch (low complexity) spans 463 to 475 (SPGSWASAAPSGP). The residue at position 528 (Lys528) is an N6-acetyllysine. Catalysis depends on Asp606, which acts as the For molybdenum cofactor biosynthesis protein C activity.

This sequence in the C-terminal section; belongs to the MoaC family. The protein in the N-terminal section; belongs to the radical SAM superfamily. MoaA family. Isoform MOCS1A and isoform MOCS1B probably form a heterooligomer. [4Fe-4S] cluster serves as cofactor. Isoform MOCS1A and isoform 2 are widely expressed.

It carries out the reaction GTP + AH2 + S-adenosyl-L-methionine = (8S)-3',8-cyclo-7,8-dihydroguanosine 5'-triphosphate + 5'-deoxyadenosine + L-methionine + A + H(+). It catalyses the reaction (8S)-3',8-cyclo-7,8-dihydroguanosine 5'-triphosphate = cyclic pyranopterin phosphate + diphosphate. The protein operates within cofactor biosynthesis; molybdopterin biosynthesis. Functionally, isoform MOCS1A and isoform MOCS1B probably form a complex that catalyzes the conversion of 5'-GTP to cyclic pyranopterin monophosphate (cPMP). MOCS1A catalyzes the cyclization of GTP to (8S)-3',8-cyclo-7,8-dihydroguanosine 5'-triphosphate and MOCS1B catalyzes the subsequent conversion of (8S)-3',8-cyclo-7,8-dihydroguanosine 5'-triphosphate to cPMP. The polypeptide is Molybdenum cofactor biosynthesis protein 1 (MOCS1) (Homo sapiens (Human)).